Consider the following 61-residue polypeptide: Small ribosomal subunit protein uS14 (61 aa).

Positions 24, 27, 40, and 43 each coordinate Zn(2+).

This sequence belongs to the universal ribosomal protein uS14 family. Zinc-binding uS14 subfamily. As to quaternary structure, part of the 30S ribosomal subunit. Contacts proteins S3 and S10. Zn(2+) serves as cofactor.

Binds 16S rRNA, required for the assembly of 30S particles and may also be responsible for determining the conformation of the 16S rRNA at the A site. This chain is Small ribosomal subunit protein uS14, found in Desulfatibacillum aliphaticivorans.